Reading from the N-terminus, the 3640-residue chain is Serine/threonine-protein kinase SMG1 (3640 aa).

Residues 21–34 (NDWQPRSDSLSASQ) show a composition bias toward polar residues. Residues 21 to 41 (NDWQPRSDSLSASQDGVKCSV) are disordered. The 349-residue stretch at 1495–1843 (YCHSGKCELA…LYPAIVGSIS (349 aa)) folds into the FAT domain. One copy of the HEAT repeat lies at 1794–1829 (APWRGIIPQLFSRLNHPEAYIRQSICSLLCRVAQDS). The segment at 1870–1890 (GLCGGESETGSGPTSQESSRG) is disordered. Residues 1874 to 1887 (GESETGSGPTSQES) are compositionally biased toward low complexity. In terms of domain architecture, PI3K/PI4K catalytic spans 2102–2441 (VGNTITILPT…MERDITRSLF (340 aa)). The interval 2108 to 2114 (ILPTKTK) is G-loop. The segment at 2310 to 2318 (GLGDRHLDN) is catalytic loop. The segment at 2330–2354 (HIDYNVCFEKGKSLRVPEKVPFRMT) is activation loop. Residues 3608-3640 (RRMSVTEQVDYVIKEATNVDNLAQLYEGWTAWV) form the FATC domain.

This sequence belongs to the PI3/PI4-kinase family. Mn(2+) serves as cofactor. In terms of processing, autophosphorylated.

The protein resides in the nucleus. It is found in the cytoplasm. It carries out the reaction L-seryl-[protein] + ATP = O-phospho-L-seryl-[protein] + ADP + H(+). It catalyses the reaction L-threonyl-[protein] + ATP = O-phospho-L-threonyl-[protein] + ADP + H(+). Functionally, serine/threonine protein kinase involved in both mRNA surveillance and genotoxic stress response pathways. Recognizes the substrate consensus sequence [ST]-Q. Plays a central role in nonsense-mediated decay (NMD) of mRNAs containing premature stop codons by phosphorylating UPF1/RENT1. The sequence is that of Serine/threonine-protein kinase SMG1 from Danio rerio (Zebrafish).